We begin with the raw amino-acid sequence, 201 residues long: Glutathione peroxidase 1, mitochondrial (201 aa).

A mitochondrion-targeting transit peptide spans 1–27 (MLLTRKNVAVRPARAARRDVRAMSLLG). Sec-75 is a catalytic residue. Sec-75 is a non-standard amino acid (selenocysteine).

The protein localises to the mitochondrion. The enzyme catalyses 2 glutathione + H2O2 = glutathione disulfide + 2 H2O. Functionally, may constitute a glutathione peroxidase-like protective system against oxidative stresses. Hydrogen peroxide, tert-butyl hydroperoxide and cumene, but not phosphatidylcholine hydroperoxide, can act as acceptors. The chain is Glutathione peroxidase 1, mitochondrial from Chlamydomonas reinhardtii (Chlamydomonas smithii).